A 278-amino-acid chain; its full sequence is Probable endonuclease 4 (278 aa).

Zn(2+) is bound by residues H69, H109, E145, D179, H182, H216, D229, H231, and E261.

This sequence belongs to the AP endonuclease 2 family. Zn(2+) serves as cofactor.

It carries out the reaction Endonucleolytic cleavage to 5'-phosphooligonucleotide end-products.. Functionally, endonuclease IV plays a role in DNA repair. It cleaves phosphodiester bonds at apurinic or apyrimidinic (AP) sites, generating a 3'-hydroxyl group and a 5'-terminal sugar phosphate. In Buchnera aphidicola subsp. Baizongia pistaciae (strain Bp), this protein is Probable endonuclease 4.